Consider the following 594-residue polypeptide: Putative lipase ATG15-1 (594 aa).

The Cytoplasmic portion of the chain corresponds to 1–12 (MRRRPLCTSASR). The helical; Signal-anchor for type II membrane protein transmembrane segment at 13 to 33 (VTASLLLSFLAVSSAAELPIL) threads the bilayer. At 34–594 (PAPPISPQPH…ANHFVYVLHA (561 aa)) the chain is on the lumenal side. N-linked (GlcNAc...) asparagine glycosylation is found at asparagine 144, asparagine 179, asparagine 201, asparagine 259, and asparagine 283. The active-site Charge relay system is serine 299. 2 N-linked (GlcNAc...) asparagine glycosylation sites follow: asparagine 432 and asparagine 445. Positions 447-469 (TETTTTSTSKPTSTSKSSKSNTR) are enriched in low complexity. Disordered stretches follow at residues 447 to 473 (TETT…TRTE) and 489 to 509 (TGTQ…TSTC). Residues asparagine 576 and asparagine 582 are each glycosylated (N-linked (GlcNAc...) asparagine).

This sequence belongs to the AB hydrolase superfamily. Lipase family. In terms of assembly, binds to both phosphatidylinositol (PI) and phosphatidylinositol 3,5-bisphosphate (PIP2).

It localises to the endosome. Its subcellular location is the multivesicular body membrane. The protein resides in the prevacuolar compartment membrane. It catalyses the reaction a triacylglycerol + H2O = a diacylglycerol + a fatty acid + H(+). In terms of biological role, lipase which is essential for lysis of subvacuolar cytoplasm to vacuole targeted bodies and intravacuolar autophagic bodies. Involved in the lysis of intravacuolar multivesicular body (MVB) vesicles. The intravacuolar membrane disintegration by ATG15 is critical to life span extension. In Phaeosphaeria nodorum (strain SN15 / ATCC MYA-4574 / FGSC 10173) (Glume blotch fungus), this protein is Putative lipase ATG15-1 (ATG15-1).